The following is a 165-amino-acid chain: Xanthine-guanine phosphoribosyltransferase (165 aa).

5-phospho-alpha-D-ribose 1-diphosphate contacts are provided by residues 41-42 (RG) and 98-106 (DDLTDTGKT). Asp-99 contacts Mg(2+). Asp-102 and Ile-145 together coordinate guanine. Asp-102 and Ile-145 together coordinate xanthine. GMP-binding positions include 102 to 106 (DTGKT) and 144 to 145 (WI).

This sequence belongs to the purine/pyrimidine phosphoribosyltransferase family. XGPT subfamily. In terms of assembly, homotetramer. Mg(2+) is required as a cofactor.

The protein resides in the cell inner membrane. It carries out the reaction GMP + diphosphate = guanine + 5-phospho-alpha-D-ribose 1-diphosphate. The catalysed reaction is XMP + diphosphate = xanthine + 5-phospho-alpha-D-ribose 1-diphosphate. The enzyme catalyses IMP + diphosphate = hypoxanthine + 5-phospho-alpha-D-ribose 1-diphosphate. The protein operates within purine metabolism; GMP biosynthesis via salvage pathway; GMP from guanine: step 1/1. Its pathway is purine metabolism; XMP biosynthesis via salvage pathway; XMP from xanthine: step 1/1. In terms of biological role, purine salvage pathway enzyme that catalyzes the transfer of the ribosyl-5-phosphate group from 5-phospho-alpha-D-ribose 1-diphosphate (PRPP) to the N9 position of the 6-oxopurines guanine and xanthine to form the corresponding ribonucleotides GMP (guanosine 5'-monophosphate) and XMP (xanthosine 5'-monophosphate), with the release of PPi. To a lesser extent, also acts on hypoxanthine. The protein is Xanthine-guanine phosphoribosyltransferase of Sinorhizobium medicae (strain WSM419) (Ensifer medicae).